The following is a 162-amino-acid chain: Phosphopantetheine adenylyltransferase (162 aa).

Thr-10 provides a ligand contact to substrate. Residues Thr-10 to Phe-11 and His-18 contribute to the ATP site. Substrate-binding residues include Lys-42, Leu-74, and Arg-88. Residues Gly-89–Arg-91, Glu-99, and Phe-124–Thr-130 each bind ATP.

This sequence belongs to the bacterial CoaD family. In terms of assembly, homohexamer. Mg(2+) is required as a cofactor.

It is found in the cytoplasm. The enzyme catalyses (R)-4'-phosphopantetheine + ATP + H(+) = 3'-dephospho-CoA + diphosphate. It functions in the pathway cofactor biosynthesis; coenzyme A biosynthesis; CoA from (R)-pantothenate: step 4/5. Functionally, reversibly transfers an adenylyl group from ATP to 4'-phosphopantetheine, yielding dephospho-CoA (dPCoA) and pyrophosphate. The chain is Phosphopantetheine adenylyltransferase from Francisella philomiragia subsp. philomiragia (strain ATCC 25017 / CCUG 19701 / FSC 153 / O#319-036).